Consider the following 71-residue polypeptide: UPF0352 protein Swoo_2786 (71 aa).

Belongs to the UPF0352 family.

The polypeptide is UPF0352 protein Swoo_2786 (Shewanella woodyi (strain ATCC 51908 / MS32)).